The following is a 278-amino-acid chain: Large ribosomal subunit protein uL2c (278 aa).

Disordered stretches follow at residues 32–56 (SLTS…HRGG) and 203–256 (QSIG…PTIG). A compositionally biased stretch (basic residues) spans 209-220 (GSKRWQGKRPKV).

It belongs to the universal ribosomal protein uL2 family. As to quaternary structure, part of the 50S ribosomal subunit.

The protein localises to the plastid. Its subcellular location is the chloroplast. This Chara vulgaris (Common stonewort) protein is Large ribosomal subunit protein uL2c (rpl2).